Reading from the N-terminus, the 137-residue chain is Cytochrome b5 (137 aa).

The Cytochrome b5 heme-binding domain occupies 6-82 (KKVYTLEEVA…MDEYYVGDID (77 aa)). The heme site is built by H41 and H65. A helical membrane pass occupies residues 108 to 128 (FIIKILQFLVPLAILGLAVAI).

It belongs to the cytochrome b5 family.

The protein resides in the endoplasmic reticulum membrane. It is found in the microsome membrane. Membrane bound hemoprotein which function as an electron carrier for several membrane bound oxygenases. In Oryza sativa subsp. japonica (Rice), this protein is Cytochrome b5.